The sequence spans 248 residues: MEDKKLSSAKPATSSKPAPKAPSTGTKVVTKPASGPRPAFKPGQRKPHASNASNDKVAFEKRNFTSGDKTKKPTDSKNPRFQRNNKDRKFVSEYEEKIVDIARVTKVVKGGRRFSFSAFVVIGNKKGTVGYGHGKANEVPDAIKKAIKDAHNNLVEVPITKGTVPHEVTAKFLASKVLLKSAPKGKGLIASSRVRAVVELAGYTDIVSKTYGSRSAQNVVKSVVKALLNLRTAKQIAEVRDKDVKDLL.

The disordered stretch occupies residues 1–87 (MEDKKLSSAK…NPRFQRNNKD (87 aa)). Residues 8–23 (SAKPATSSKPAPKAPS) show a composition bias toward low complexity. A compositionally biased stretch (basic and acidic residues) spans 57–87 (VAFEKRNFTSGDKTKKPTDSKNPRFQRNNKD). The region spanning 94–157 (YEEKIVDIAR…KDAHNNLVEV (64 aa)) is the S5 DRBM domain.

This sequence belongs to the universal ribosomal protein uS5 family. As to quaternary structure, part of the 30S ribosomal subunit. Contacts proteins S4 and S8.

In terms of biological role, with S4 and S12 plays an important role in translational accuracy. Located at the back of the 30S subunit body where it stabilizes the conformation of the head with respect to the body. In Mycoplasmopsis synoviae (strain 53) (Mycoplasma synoviae), this protein is Small ribosomal subunit protein uS5.